A 333-amino-acid polypeptide reads, in one-letter code: HTH-type transcriptional repressor PurR (333 aa).

Residues 2–56 (ATIKDVAKMAGVSTTTVSHVINKTRFVAKETEQQVLQAIKNLNYSPSAVARSLKV) form the HTH lacI-type domain. Positions 4–23 (IKDVAKMAGVSTTTVSHVIN) form a DNA-binding region, H-T-H motif. The DNA-binding element occupies 48-56 (SAVARSLKV). Positions 73, 189, 191, 220, and 274 each coordinate hypoxanthine.

Homodimer.

Its pathway is purine metabolism; purine nucleotide biosynthesis [regulation]. In terms of biological role, is the main repressor of the genes involved in the de novo synthesis of purine nucleotides, regulating purB, purC, purEK, purF, purHD, purL, purMN and guaBA expression. PurR is allosterically activated to bind its cognate DNA by binding the purine corepressors, hypoxanthine or guanine, thereby effecting transcription repression. This chain is HTH-type transcriptional repressor PurR, found in Histophilus somni (strain 2336) (Haemophilus somnus).